We begin with the raw amino-acid sequence, 3295 residues long: Toxin CdiA (3295 aa).

Positions Pro33 to Ala366 are two-partner system transport domain (TPS). Residues Leu55 to Ser75 traverse the membrane as a helical segment. The FHA-1 stretch occupies residues Gly353–Asn1574. The segment at Pro1165–Pro1185 is disordered. Residues Arg1575–Pro1796 are receptor binding domain (RBD). Residues Gly1797 to Asn1977 are YP domain. A disordered region spans residues Asn1806–Thr1831. Residues Gly1998–Asn2035 form a periplasmic FHA-1 repeat (pFR) region. Residues Leu2022 to Ser2676 form an FHA-2 region. Disordered regions lie at residues Thr2260 to Ser2292 and Gln2823 to Glu2847. Residues Gln2823–Gly2838 are compositionally biased toward polar residues. A VENN CT cleavage motif motif is present at residues Val3073 to Asn3076. The interval Val3073–Lys3295 is CT domain. A disordered region spans residues Ser3276–Lys3295. Residues Gln3286–Lys3295 show a composition bias toward basic and acidic residues.

In the N-terminal section; belongs to the CdiA toxin family. As to quaternary structure, probably interacts with cognate immunity protein CdiI.

It is found in the membrane. The protein resides in the target cell. The protein localises to the target cell cytoplasm. Its function is as follows. Toxic component of a toxin-immunity protein module, which functions as a cellular contact-dependent growth inhibition (CDI) system. CDI modules allow bacteria to communicate with and inhibit the growth of closely related neighboring bacteria in a contact-dependent fashion. CDI is neutralized by its cognate immunity protein CdiI, but not by non-cognate CdiI from other bacteria. The CdiA protein is thought to be exported from the cell through the central lumen of CdiB, the other half of its two-partner system (TPS). The TPS domain probably remains associated with CdiB while the FHA-1 domain forms an extended filament with the receptor-binding domain (RBD) at its extremity; in the secretion arrested state the C-terminus of the RBD and YP domains form a hairpin-like structure as the FHA-2, PT and CT domains are periplasmic. The YP domain is probably responsible for this arrest at the point where it re-enters the host cell periplasm. Upon binding to a target cell outer membrane receptor a signal is transmitted to activate secretion. The filament elongates slightly, the rest of CdiA is secreted and the FHA-2 domain becomes stably associated with the target cell's outer membrane where it facilitates entry of the toxic CT domain into the target cell periplasm. From there the toxic CT domain is cleaved and gains access to the target cell cytoplasm via an inner membrane protein. This is Toxin CdiA from Yersinia pestis.